A 264-amino-acid polypeptide reads, in one-letter code: uncharacterized protein (264 aa).

6 consecutive transmembrane segments (helical) span residues 23–43, 59–79, 91–111, 150–170, 190–210, and 233–253; these read LIFL…TALI, FDTF…YYFL, LVLS…FYAL, FSEL…VGLL, AGIY…LNVW, and WIWS…LFVI.

The protein resides in the cell membrane. This is an uncharacterized protein from Mycoplasma genitalium (strain ATCC 33530 / DSM 19775 / NCTC 10195 / G37) (Mycoplasmoides genitalium).